The following is a 450-amino-acid chain: 23S rRNA (uracil(1939)-C(5))-methyltransferase RlmD (450 aa).

Positions 1–62 (MPVAGPLEIV…PSYEQATLVD (62 aa)) constitute a TRAM domain. [4Fe-4S] cluster-binding residues include Cys-75, Cys-81, Cys-84, and Cys-163. Gln-271, Phe-300, Asn-305, Glu-321, Asn-349, and Asp-370 together coordinate S-adenosyl-L-methionine. Residue Cys-406 is the Nucleophile of the active site.

It belongs to the class I-like SAM-binding methyltransferase superfamily. RNA M5U methyltransferase family. RlmD subfamily.

The enzyme catalyses uridine(1939) in 23S rRNA + S-adenosyl-L-methionine = 5-methyluridine(1939) in 23S rRNA + S-adenosyl-L-homocysteine + H(+). In terms of biological role, catalyzes the formation of 5-methyl-uridine at position 1939 (m5U1939) in 23S rRNA. This is 23S rRNA (uracil(1939)-C(5))-methyltransferase RlmD from Ralstonia nicotianae (strain ATCC BAA-1114 / GMI1000) (Ralstonia solanacearum).